Consider the following 113-residue polypeptide: Retrotransposon Gag-like protein 8C (113 aa).

Belongs to the FAM127 family.

This is Retrotransposon Gag-like protein 8C from Homo sapiens (Human).